A 478-amino-acid chain; its full sequence is Odorant receptor coreceptor (478 aa).

Residues 1-43 are Cytoplasmic-facing; the sequence is MMKMKQQGLVADLLPNIRVMKTFGHFVFNYYNDNSSKYLHKVY. Residues 44-64 form a helical membrane-spanning segment; the sequence is CCVNLFMLLLQFGLCAVNLIV. At 65–73 the chain is on the extracellular side; it reads ESADVDDLT. A helical transmembrane segment spans residues 74–94; sequence ANTITLLFFTHSIVKICYFAI. Over 95–133 the chain is Cytoplasmic; it reads RSKYFYRTWAIWNNPNSHPLFAESNARYHAIALKKMRLL. The helical transmembrane segment at 134-154 threads the bilayer; sequence LFLVGGTTMLAAVAWTVLTFF. The Extracellular portion of the chain corresponds to 155–190; it reads EHPIRKIVDPVTNETEIIELPQLLIRSFYPFDAGKG. N-linked (GlcNAc...) asparagine glycosylation is present at asparagine 167. The helical transmembrane segment at 191–211 threads the bilayer; sequence ITHVLVLVYQFYWVLFMLIDA. At 212 to 349 the chain is on the cytoplasmic side; sequence NSLDVLFCSW…IVRLVTAVGD (138 aa). Residues 261 to 281 form a disordered region; sequence SADHLRDGDNPPPPPPPQSDN. A helical membrane pass occupies residues 350–370; it reads AYGFALLLHMLTTTITLTLLA. Over 371–382 the chain is Extracellular; it reads YQATKVNGINVY. The chain crosses the membrane as a helical span at residues 383 to 403; sequence AASTIGYILYTFGQVFLFCIF. The Cytoplasmic segment spans residues 404-454; the sequence is GNRLIEESTSVMEAAYSCHWYDGSEEAKTFVQIVCQQCQKAMSISGAKFFT. Residues 455 to 475 traverse the membrane as a helical segment; that stretch reads VSLDLFASVLGAVVTYFMVLV. Over 476-478 the chain is Extracellular; it reads QLK.

This sequence belongs to the insect chemoreceptor superfamily. Heteromeric odorant receptor channel (TC 1.A.69) family. Orco subfamily. In terms of assembly, heterodimer with conventional odorant receptors (ORs). In terms of tissue distribution, present in antennae (at protein level).

It localises to the cell membrane. Odorant coreceptor which complexes with conventional odorant receptors (ORs) to form odorant-sensing units, providing sensitive and prolonged odorant signaling and calcium permeability. Obligate coreceptor of all odorant receptors. Orco is a universal and integral part of the functional odorant receptor, involved in the dendritic localization of other olfactory receptors. Can form functional ion channels in the absence of an odor-binding odorant receptor. Plays a central role in the perception of olfactory stimuli in ants and is essential for ant social organization. Required for pheromone sensing. Also required for the development and maintenance of odorant receptor neurons (ORNs) and of antennal lobe glomeruli. This Ooceraea biroi (Clonal raider ant) protein is Odorant receptor coreceptor.